Reading from the N-terminus, the 414-residue chain is Protein IQ-DOMAIN 8 (414 aa).

The short motif at 14–21 (NKKNITDD) is the Nuclear localization signal 1 element. The interval 40–61 (LISSSKGFKSRGGSYGTPSLGS) is disordered. 3 IQ domains span residues 92-120 (REWA…AVVR), 121-143 (IQAI…CMQA), and 144-169 (LVRV…EKPS). The segment at 119-132 (VRIQAIFRGRQVRK) is calmodulin-binding. Disordered stretches follow at residues 156–190 (NRGP…SPGS), 218–244 (HQPR…SCKS), and 262–329 (GRLM…SGSF). Over residues 164-184 (ELEKPSDQQKDDPAKQAEKGW) the composition is skewed to basic and acidic residues. Over residues 231–244 (KQGSVKKNNGSCKS) the composition is skewed to polar residues. A compositionally biased stretch (basic and acidic residues) spans 274–289 (NARKSESSVSEHDTVQ). Residues 307–328 (SSSATSSESSSTSQSPVPFSGS) are compositionally biased toward low complexity. Positions 336-343 (YRKPSYMS) match the Nuclear localization signal 2 motif. The disordered stretch occupies residues 347–398 (SIKAKQRRSGSSSSCSKTPFEKKQSMSYNGDVNVRRSAGSDPLNNQWTDLYP).

Belongs to the IQD family. Binds to multiple calmodulin (CaM) in the presence of Ca(2+) and CaM-like proteins.

Its subcellular location is the nucleus. The protein localises to the cytoplasm. It is found in the cytoskeleton. It localises to the nucleus envelope. Functionally, may be involved in cooperative interactions with calmodulins or calmodulin-like proteins. Recruits calmodulin proteins to microtubules, thus being a potential scaffold in cellular signaling and trafficking. May associate with nucleic acids and regulate gene expression at the transcriptional or post-transcriptional level. This Arabidopsis thaliana (Mouse-ear cress) protein is Protein IQ-DOMAIN 8.